A 517-amino-acid chain; its full sequence is ADP-ribosylation factor GTPase-activating protein 3 (517 aa).

The Arf-GAP domain occupies 10-126; sequence LTIFKRLRSV…IKALASQATR (117 aa). The C4-type zinc finger occupies 25 to 48; it reads CFDCGAKNPSWASITYGVFLCIDC. The disordered stretch occupies residues 139–200; it reads VPPSSPPPKE…EQGPSVEGLN (62 aa). Residues 159–176 are compositionally biased toward polar residues; sequence EVSSTGWASAQPEPSLTP. Phosphoserine is present on Ser-231. Residues 243–263 are a coiled coil; the sequence is NEIEKQAQAVDKMNAQEDLLS. Phosphoserine is present on residues Ser-271 and Ser-275. Residues 291 to 305 show a composition bias toward basic and acidic residues; sequence EKMNMSGKKKAESER. Disordered stretches follow at residues 291-349 and 362-422; these read EKMN…SDDS and MELR…QKKF. Positions 312–333 are enriched in polar residues; the sequence is NSRSGISHSVTSDMQTIEQETP. A Phosphoserine modification is found at Ser-371. A compositionally biased stretch (basic and acidic residues) spans 379–390; it reads YWKKETIKDTDP. Residues Ser-429, Ser-452, Ser-454, Ser-456, Ser-458, and Ser-459 each carry the phosphoserine modification.

Its subcellular location is the cytoplasm. It localises to the golgi apparatus membrane. Its activity is regulated as follows. GAP activity stimulated by phosphatidylinositol 4,5-bisphosphate (PIP2). GTPase-activating protein (GAP) for ADP ribosylation factor 1 (ARF1). Hydrolysis of ARF1-bound GTP may lead to dissociation of coatomer from Golgi-derived membranes to allow fusion with target membranes. This Bos taurus (Bovine) protein is ADP-ribosylation factor GTPase-activating protein 3.